The chain runs to 216 residues: Large ribosomal subunit protein uL1B (216 aa).

Ser-11 carries the post-translational modification Phosphoserine.

Belongs to the universal ribosomal protein uL1 family. In terms of assembly, component of the large ribosomal subunit (LSU). Mature yeast ribosomes consist of a small (40S) and a large (60S) subunit. The 40S small subunit contains 1 molecule of ribosomal RNA (18S rRNA) and at least 33 different proteins. The large 60S subunit contains 3 rRNA molecules (25S, 5.8S and 5S rRNA) and at least 46 different proteins. uL1 forms part of the L1 stalk.

The protein localises to the cytoplasm. In terms of biological role, component of the ribosome, a large ribonucleoprotein complex responsible for the synthesis of proteins in the cell. The small ribosomal subunit (SSU) binds messenger RNAs (mRNAs) and translates the encoded message by selecting cognate aminoacyl-transfer RNA (tRNA) molecules. The large subunit (LSU) contains the ribosomal catalytic site termed the peptidyl transferase center (PTC), which catalyzes the formation of peptide bonds, thereby polymerizing the amino acids delivered by tRNAs into a polypeptide chain. The nascent polypeptides leave the ribosome through a tunnel in the LSU and interact with protein factors that function in enzymatic processing, targeting, and the membrane insertion of nascent chains at the exit of the ribosomal tunnel. uL1 forms part of the L1 stalk, a mobile element that plays a role in evacuating the exit-site tRNA. This is Large ribosomal subunit protein uL1B (rpl101) from Schizosaccharomyces pombe (strain 972 / ATCC 24843) (Fission yeast).